A 455-amino-acid polypeptide reads, in one-letter code: P2X purinoceptor 5 (455 aa).

Residues 1–34 (MGQAAWKGFVLSLFDYKTAKFVVAKSKKVGLLYR) are Cytoplasmic-facing. Residues 35–55 (VLQLIILLYLLIWVFLIKKSY) form a helical membrane-spanning segment. Residues 56 to 341 (QDIDTSLQSA…SIIPTVINIG (286 aa)) lie on the Extracellular side of the membrane. ATP-binding residues include lysine 69 and lysine 71. N-linked (GlcNAc...) asparagine glycosylation occurs at asparagine 77. Intrachain disulfides connect cysteine 118/cysteine 169, cysteine 129/cysteine 152, and cysteine 135/cysteine 163. N-linked (GlcNAc...) asparagine glycosylation is present at asparagine 157. Threonine 189 contacts ATP. Asparagine 202 is a glycosylation site (N-linked (GlcNAc...) asparagine). Cystine bridges form between cysteine 220/cysteine 229 and cysteine 263/cysteine 272. Residues asparagine 294, arginine 296, and lysine 314 each contribute to the ATP site. The helical transmembrane segment at 342 to 362 (SGLALMGAGAFFCDLVLIYLI) threads the bilayer. Topologically, residues 363 to 455 (RKSEFYRDKK…QSQILHPVKT (93 aa)) are cytoplasmic. The span at 384–401 (NVEVEANEMEQERPEDEP) shows a compositional bias: acidic residues. The disordered stretch occupies residues 384–422 (NVEVEANEMEQERPEDEPLERVRQDEQSQELAQSGRKQN). Over residues 412–422 (QELAQSGRKQN) the composition is skewed to polar residues.

It belongs to the P2X receptor family. As to quaternary structure, functional P2XRs are organized as homomeric and heteromeric trimers. Homotrimer. Forms heterotrimer with P2RX1. In terms of tissue distribution, predominantly expressed in heart but are also present in brain, spinal cord and adrenal gland.

The protein resides in the cell membrane. The catalysed reaction is Na(+)(in) = Na(+)(out). It carries out the reaction Ca(2+)(in) = Ca(2+)(out). It catalyses the reaction chloride(in) = chloride(out). Its activity is regulated as follows. Activated by ATP. Slowly desensitizing. Not activated by ATP agonist alpha/beta-methylene-ATP. Highly sensitive to the antagonists suramin and PPADS. ATP-gated nonselective transmembrane cation channel. Permeable to potassium, sodium and calcium. Unlike other P2RX receptors, the P2X5 receptor is also permeable to chloride. Acts as an important regulator of inflammatory-related bone loss and osteoclast multinucleation. The chain is P2X purinoceptor 5 (P2rx5) from Rattus norvegicus (Rat).